The chain runs to 130 residues: Small ribosomal subunit protein uS9 (130 aa).

Residues 99–130 are disordered; the sequence is KRAGLLTRDPRMKERKKPGLKAARRSPQFSKR. The span at 111-130 shows a compositional bias: basic residues; it reads KERKKPGLKAARRSPQFSKR.

The protein belongs to the universal ribosomal protein uS9 family.

The sequence is that of Small ribosomal subunit protein uS9 from Staphylococcus aureus (strain Mu3 / ATCC 700698).